Reading from the N-terminus, the 160-residue chain is Cytochrome b6-f complex subunit 4 (160 aa).

3 consecutive transmembrane segments (helical) span residues 36–56, 95–115, and 128–148; these read LLYI…GLAV, LLGI…PFIE, and IAMA…IGAC.

Belongs to the cytochrome b family. PetD subfamily. In terms of assembly, the 4 large subunits of the cytochrome b6-f complex are cytochrome b6, subunit IV (17 kDa polypeptide, PetD), cytochrome f and the Rieske protein, while the 4 small subunits are PetG, PetL, PetM and PetN. The complex functions as a dimer.

Its subcellular location is the cellular thylakoid membrane. Functionally, component of the cytochrome b6-f complex, which mediates electron transfer between photosystem II (PSII) and photosystem I (PSI), cyclic electron flow around PSI, and state transitions. The polypeptide is Cytochrome b6-f complex subunit 4 (Prochlorococcus marinus (strain MIT 9303)).